A 310-amino-acid chain; its full sequence is Acetylglutamate kinase (310 aa).

Residues 70–71, arginine 92, and asparagine 191 contribute to the substrate site; that span reads GG.

This sequence belongs to the acetylglutamate kinase family. ArgB subfamily.

The protein localises to the cytoplasm. The catalysed reaction is N-acetyl-L-glutamate + ATP = N-acetyl-L-glutamyl 5-phosphate + ADP. It participates in amino-acid biosynthesis; L-arginine biosynthesis; N(2)-acetyl-L-ornithine from L-glutamate: step 2/4. Catalyzes the ATP-dependent phosphorylation of N-acetyl-L-glutamate. The chain is Acetylglutamate kinase from Corynebacterium diphtheriae (strain ATCC 700971 / NCTC 13129 / Biotype gravis).